The primary structure comprises 145 residues: Hemoglobin subunit beta (145 aa).

The 145-residue stretch at 1–145 (MLTAEEKAAV…VANALAHRYH (145 aa)) folds into the Globin domain. Residue Thr11 is modified to Phosphothreonine. Phosphoserine is present on Ser43. Lys58 carries the post-translational modification N6-acetyllysine. Heme b is bound at residue His62. Lys81 is subject to N6-acetyllysine. His91 serves as a coordination point for heme b. The residue at position 92 (Cys92) is an S-nitrosocysteine.

It belongs to the globin family. In terms of assembly, heterotetramer of two alpha chains and two beta chains. In terms of tissue distribution, red blood cells.

In terms of biological role, involved in oxygen transport from the lung to the various peripheral tissues. In Tragelaphus strepsiceros (Greater kudu), this protein is Hemoglobin subunit beta (HBB).